Reading from the N-terminus, the 447-residue chain is Methylenetetrahydrofolate--tRNA-(uracil-5-)-methyltransferase TrmFO (447 aa).

Residue 10–15 (GAGLAG) coordinates FAD.

Belongs to the MnmG family. TrmFO subfamily. FAD serves as cofactor.

It localises to the cytoplasm. It carries out the reaction uridine(54) in tRNA + (6R)-5,10-methylene-5,6,7,8-tetrahydrofolate + NADH + H(+) = 5-methyluridine(54) in tRNA + (6S)-5,6,7,8-tetrahydrofolate + NAD(+). It catalyses the reaction uridine(54) in tRNA + (6R)-5,10-methylene-5,6,7,8-tetrahydrofolate + NADPH + H(+) = 5-methyluridine(54) in tRNA + (6S)-5,6,7,8-tetrahydrofolate + NADP(+). In terms of biological role, catalyzes the folate-dependent formation of 5-methyl-uridine at position 54 (M-5-U54) in all tRNAs. The chain is Methylenetetrahydrofolate--tRNA-(uracil-5-)-methyltransferase TrmFO from Symbiobacterium thermophilum (strain DSM 24528 / JCM 14929 / IAM 14863 / T).